Reading from the N-terminus, the 392-residue chain is Putative cystathionine gamma-lyase (392 aa).

Residues 1–10 are compositionally biased toward polar residues; the sequence is MSDSATTDSA. Residues 1–41 form a disordered region; the sequence is MSDSATTDSAGTGGERSASAPGDGTRAVRAGLPEPVKHEPT. Lys216 is modified (N6-(pyridoxal phosphate)lysine).

It belongs to the trans-sulfuration enzymes family. Pyridoxal 5'-phosphate serves as cofactor.

It localises to the cytoplasm. The enzyme catalyses L,L-cystathionine + H2O = 2-oxobutanoate + L-cysteine + NH4(+). Its pathway is amino-acid biosynthesis; L-cysteine biosynthesis; L-cysteine from L-homocysteine and L-serine: step 2/2. This Streptomyces coelicolor (strain ATCC BAA-471 / A3(2) / M145) protein is Putative cystathionine gamma-lyase (cysA).